A 769-amino-acid polypeptide reads, in one-letter code: Cap-specific mRNA (nucleoside-2'-O-)-methyltransferase 2 (769 aa).

Residues 109–322 (ELCTQAWCKF…VYVVCLYYKG (214 aa)) enclose the Adrift-type SAM-dependent 2'-O-MTase domain. Lys-117 is a catalytic residue. S-adenosyl-L-methionine is bound by residues Gly-148, Trp-167, and Asp-235. Asp-235 is a catalytic residue. The Proton acceptor role is filled by Lys-275.

It localises to the nucleus. It is found in the cytoplasm. It catalyses the reaction a 5'-end (N(7)-methyl 5'-triphosphoguanosine)-(2'-O-methyl-ribonucleoside)-(ribonucleotide) in mRNA + S-adenosyl-L-methionine = a 5'-end (N(7)-methyl 5'-triphosphoguanosine)-(2'-O-methyl-ribonucleoside)-(2'-O-methyl-ribonucleotide) in mRNA + S-adenosyl-L-homocysteine + H(+). Its function is as follows. S-adenosyl-L-methionine-dependent methyltransferase that mediates mRNA cap2 2'-O-ribose methylation to the 5'-cap structure of mRNAs. Methylates the ribose of the second nucleotide of a m(7)GpppG-capped mRNA and small nuclear RNA (snRNA) (cap0) to produce m(7)GpppRmpNm (cap2). Recognizes a guanosine cap on RNA independently of its N(7) methylation status. Display cap2 methylation on both cap0 and cap1. Displays a preference for cap1 RNAs. The polypeptide is Cap-specific mRNA (nucleoside-2'-O-)-methyltransferase 2 (CMTR2) (Pongo abelii (Sumatran orangutan)).